The primary structure comprises 189 residues: Movement protein (189 aa).

Belongs to the tombusvirus/aureusvirus movement protein p22 family.

The protein localises to the host membrane. In terms of biological role, transports viral genome to neighboring plant cells directly through plasmosdesmata, without any budding. The movement protein allows efficient cell to cell propagation, by bypassing the host cell wall barrier. This Artichoke mottled crinkle virus (AMCV) protein is Movement protein.